Reading from the N-terminus, the 437-residue chain is Amino-acid acetyltransferase (437 aa).

Residues 289–429 (ENIRLATSFD…EHYNYQRMSK (141 aa)) form the N-acetyltransferase domain.

It belongs to the acetyltransferase family. ArgA subfamily.

The protein localises to the cytoplasm. It catalyses the reaction L-glutamate + acetyl-CoA = N-acetyl-L-glutamate + CoA + H(+). It functions in the pathway amino-acid biosynthesis; L-arginine biosynthesis; N(2)-acetyl-L-ornithine from L-glutamate: step 1/4. The polypeptide is Amino-acid acetyltransferase (Actinobacillus pleuropneumoniae serotype 5b (strain L20)).